Here is a 290-residue protein sequence, read N- to C-terminus: tRNA dimethylallyltransferase (290 aa).

Position 11-18 (11-18 (GPTASGKS)) interacts with ATP. 13 to 18 (TASGKS) is a binding site for substrate. Interaction with substrate tRNA regions lie at residues 36–39 (DSMQ) and 158–162 (QRIVR).

Belongs to the IPP transferase family. Monomer. The cofactor is Mg(2+).

It carries out the reaction adenosine(37) in tRNA + dimethylallyl diphosphate = N(6)-dimethylallyladenosine(37) in tRNA + diphosphate. Its function is as follows. Catalyzes the transfer of a dimethylallyl group onto the adenine at position 37 in tRNAs that read codons beginning with uridine, leading to the formation of N6-(dimethylallyl)adenosine (i(6)A). This Bartonella henselae (strain ATCC 49882 / DSM 28221 / CCUG 30454 / Houston 1) (Rochalimaea henselae) protein is tRNA dimethylallyltransferase.